Here is a 328-residue protein sequence, read N- to C-terminus: Olfactory receptor 4A16 (328 aa).

Over 1 to 23 (MRPSSNVTEFVLLGLTQDPDVKK) the chain is Extracellular. Asn6 carries an N-linked (GlcNAc...) asparagine glycan. A helical membrane pass occupies residues 24–47 (TLFVMFLLIYIVTMVGNLLIWVTT). Topologically, residues 48 to 55 (IGSPSLGS) are cytoplasmic. The helical transmembrane segment at 56 to 77 (LMYFFLAYLSLMDAIYSTAMSP) threads the bilayer. At 78 to 98 (KLMIDLLCDKIAISLSACMGQ) the chain is on the extracellular side. Cysteines 95 and 187 form a disulfide. Residues 99 to 118 (LFIEHLLGGAEVFLLVVMAY) traverse the membrane as a helical segment. Residues 119–137 (DRYVAISKPLHYLNIMNRL) lie on the Cytoplasmic side of the membrane. Residues 138–156 (VCILLLVVAMIGGFVHSVV) form a helical membrane-spanning segment. Over 157-193 (QIVFLYSLPICGPNVIDHSVCDMYPLLELLCLDTYFI) the chain is Extracellular. Residues 194–217 (GLTVVANGGIICMVIFTFLLISCG) traverse the membrane as a helical segment. The Cytoplasmic portion of the chain corresponds to 218-233 (VILNFLKTYSQEERHK). A helical membrane pass occupies residues 234 to 256 (ALPTCISHIIVVALVFVPCIFMY). The Extracellular portion of the chain corresponds to 257-267 (VRPVSNFPFDK). Residues 268–287 (LMTVFYSIITLMLNPLIYSL) form a helical membrane-spanning segment. Topologically, residues 288-328 (RQSEMKNAMKNLWCEKLSIVRKRVSPTLNIFIPSSKATNRR) are cytoplasmic.

This sequence belongs to the G-protein coupled receptor 1 family.

It is found in the cell membrane. Odorant receptor. The protein is Olfactory receptor 4A16 (OR4A16) of Homo sapiens (Human).